Consider the following 152-residue polypeptide: Large ribosomal subunit protein uL11 (152 aa).

This sequence belongs to the universal ribosomal protein uL11 family. Part of the ribosomal stalk of the 50S ribosomal subunit. Interacts with L10 and the large rRNA to form the base of the stalk. L10 forms an elongated spine to which L12 dimers bind in a sequential fashion forming a multimeric L10(L12)X complex. One or more lysine residues are methylated.

Its function is as follows. Forms part of the ribosomal stalk which helps the ribosome interact with GTP-bound translation factors. The sequence is that of Large ribosomal subunit protein uL11 from Mycoplasmoides gallisepticum (strain R(low / passage 15 / clone 2)) (Mycoplasma gallisepticum).